The primary structure comprises 94 residues: MPLTPETLPRHELVGLDCEVVAASNPDVIGISGTVVMETTQMLTLEGADRVWHVPKDSATFAFDLSTETVLVDGDRLVARPARRTENTGDSLWR.

It belongs to the eukaryotic/archaeal RNase P protein component 1 family. Consists of a catalytic RNA component and at least 4-5 protein subunits.

It is found in the cytoplasm. The enzyme catalyses Endonucleolytic cleavage of RNA, removing 5'-extranucleotides from tRNA precursor.. Functionally, part of ribonuclease P, a protein complex that generates mature tRNA molecules by cleaving their 5'-ends. The sequence is that of Ribonuclease P protein component 1 from Haloarcula marismortui (strain ATCC 43049 / DSM 3752 / JCM 8966 / VKM B-1809) (Halobacterium marismortui).